Reading from the N-terminus, the 804-residue chain is Endoplasmin (804 aa).

A signal peptide spans 1-21 (MRALWVLGLCCVLLTFGSVRA). The SRT pseudosubstrate motif motif lies at 42 to 44 (SRT). The N-linked (GlcNAc...) asparagine glycan is linked to Asn-62. At Ser-64 the chain carries Phosphoserine. The N-linked (GlcNAc...) asparagine glycan is linked to Asn-107. The ATP site is built by Asn-107, Asp-149, and Asn-162. Position 168 is an N6-(2-hydroxyisobutyryl)lysine (Lys-168). Ser-172 is subject to Phosphoserine. ATP is bound at residue Phe-199. Residue Asn-217 is glycosylated (N-linked (GlcNAc...) asparagine). The interval 288 to 323 (TVEEPMEEEEAAKEEKEESDDEAAVEEEEEEKKPKT) is disordered. A compositionally biased stretch (acidic residues) spans 289–317 (VEEPMEEEEAAKEEKEESDDEAAVEEEEE). Ser-306 and Ser-403 each carry phosphoserine. Lys-404 bears the N6-succinyllysine mark. N-linked (GlcNAc...) asparagine glycosylation is present at Asn-445. Ser-447 carries the post-translational modification Phosphoserine. Lys-479 is modified (N6-acetyllysine). Residues Asn-481 and Asn-502 are each glycosylated (N-linked (GlcNAc...) asparagine). Lys-633 carries the post-translational modification N6-succinyllysine. A disordered region spans residues 750–804 (DPDAKVEDEPEEEPEETTEDTTEDTEQDEDEEMDVGTDEEEQETAKESTAEKDEL). Residues 757–791 (DEPEEEPEETTEDTTEDTEQDEDEEMDVGTDEEEQ) show a composition bias toward acidic residues. Thr-786 carries the phosphothreonine modification. Basic and acidic residues predominate over residues 792-804 (ETAKESTAEKDEL). Positions 801–804 (KDEL) match the Prevents secretion from ER motif.

The protein belongs to the heat shock protein 90 family. As to quaternary structure, homodimer; disulfide-linked. Component of an EIF2 complex at least composed of CELF1/CUGBP1, CALR, CALR3, EIF2S1, EIF2S2, HSP90B1 and HSPA5. Part of a large chaperone multiprotein complex comprising DNAJB11, HSP90B1, HSPA5, HYOU, PDIA2, PDIA4, PDIA6, PPIB, SDF2L1, UGGT1 and very small amounts of ERP29, but not, or at very low levels, CALR nor CANX. Interacts with AIMP1; regulates its retention in the endoplasmic reticulum. Hyperglycosylated form interacts with OS9; promoting its degradation by the endoplasmic reticulum associated degradation (ERAD). Interacts with CNPY3. This interaction is disrupted in the presence of ATP. Interacts with TLR4 and TLR9, but not with TLR3. Interacts with MZB1 in a calcium-dependent manner. Interacts with METTL23. Interacts with IL1B; the interaction facilitates cargo translocation into the ERGIC. Interacts with EIF2AK3. In terms of processing, phosphorylated by CK2. N-glycosylated cotranslationally at Asn-217 by STT3A-containing OST-A complex: this glycosylation is constitutive. In response to various stress, 5 additional facultative sites (Asn-62, Asn-107, Asn-445, Asn-481 and Asn-502) can be glycosylated post-translationally by STT3B-containing OST-B complex, leading to a hyperglycosylated form that is degraded by the ER-associated degradation (ERAD) pathway. In normal conditions, the OST-A complex together with CCDC134 prevent glycosylation at facultative sites during protein folding, thereby preventing hyperglycosylation. Mechanistically, nascent HSP90B1 is tethered during translation to a specialized CCDC134-containing translocon that forms a microenvironment for its folding, in which STT3A associates with the SRT pseudosubstrate motif, and prevents access to facultative glycosylation sites until folding is completed, rendering its facultative sites inaccessible to the OST-B complex.

The protein localises to the endoplasmic reticulum lumen. It is found in the sarcoplasmic reticulum lumen. The protein resides in the melanosome. The enzyme catalyses ATP + H2O = ADP + phosphate + H(+). In terms of biological role, ATP-dependent chaperone involved in the processing of proteins in the endoplasmic reticulum, regulating their transport. Together with MESD, acts as a modulator of the Wnt pathway by promoting the folding of LRP6, a coreceptor of the canonical Wnt pathway. When associated with CNPY3, required for proper folding of Toll-like receptors. Promotes folding and trafficking of TLR4 to the cell surface. May participate in the unfolding of cytosolic leaderless cargos (lacking the secretion signal sequence) such as the interleukin 1/IL-1 to facilitate their translocation into the ERGIC (endoplasmic reticulum-Golgi intermediate compartment) and secretion; the translocation process is mediated by the cargo receptor TMED10. In Macaca fascicularis (Crab-eating macaque), this protein is Endoplasmin (HSP90B1).